A 289-amino-acid polypeptide reads, in one-letter code: Elongation factor Ts (289 aa).

Residues 80 to 83 are involved in Mg(2+) ion dislocation from EF-Tu; the sequence is TDFV.

It belongs to the EF-Ts family.

The protein localises to the cytoplasm. Associates with the EF-Tu.GDP complex and induces the exchange of GDP to GTP. It remains bound to the aminoacyl-tRNA.EF-Tu.GTP complex up to the GTP hydrolysis stage on the ribosome. The polypeptide is Elongation factor Ts (Francisella tularensis subsp. tularensis (strain FSC 198)).